Reading from the N-terminus, the 188-residue chain is Mediator of RNA polymerase II transcription subunit 11 (188 aa).

A coiled-coil region spans residues 46–72; the sequence is KNKMEDNANNFKKLITQVENELSAQMQ. A disordered region spans residues 116–188; the sequence is DPTSDEPQTT…MTDDDDDMEQ (73 aa). Acidic residues predominate over residues 123–141; sequence QTTEEDEEDGSDDLNEDGA. The span at 146–155 shows a compositional bias: low complexity; sequence SSTVTSSTTD. Basic and acidic residues predominate over residues 171–180; sequence SQEESGRQMT.

It belongs to the Mediator complex subunit 11 family. In terms of assembly, component of the Mediator complex.

The protein resides in the nucleus. Component of the Mediator complex, a coactivator involved in the regulated transcription of nearly all RNA polymerase II-dependent genes. Mediator functions as a bridge to convey information from gene-specific regulatory proteins to the basal RNA polymerase II transcription machinery. Mediator is recruited to promoters by direct interactions with regulatory proteins and serves as a scaffold for the assembly of a functional pre-initiation complex with RNA polymerase II and the general transcription factors. This chain is Mediator of RNA polymerase II transcription subunit 11 (mdt-11), found in Caenorhabditis elegans.